The following is a 400-amino-acid chain: Succinate--glutarate CoA-transferase (400 aa).

D181 acts as the Nucleophile in catalysis.

The protein belongs to the CoA-transferase III family.

The catalysed reaction is glutarate + succinyl-CoA = glutaryl-CoA + succinate. It functions in the pathway amino-acid degradation. It participates in cofactor biosynthesis; biotin biosynthesis. Functionally, is involved in L-lysine degradation and provides glutaryl-CoA for biotin synthesis. Catalyzes the conversion of glutarate to glutaryl-CoA via the transfer of CoA from succinyl-CoA. This is Succinate--glutarate CoA-transferase from Agrobacterium fabrum (strain C58 / ATCC 33970) (Agrobacterium tumefaciens (strain C58)).